Consider the following 442-residue polypeptide: tRNA modification GTPase MnmE (442 aa).

Residues R22, E79, and K119 each contribute to the (6S)-5-formyl-5,6,7,8-tetrahydrofolate site. The TrmE-type G domain maps to 216 to 366 (GIKTCLVGAP…LLEKIKSIFA (151 aa)). A K(+)-binding site is contributed by N226. Residues 226–231 (NSGKSS), 245–251 (SEIPGTT), and 270–273 (DTAG) each bind GTP. Mg(2+) is bound at residue S230. S245, I247, and T250 together coordinate K(+). T251 lines the Mg(2+) pocket. A (6S)-5-formyl-5,6,7,8-tetrahydrofolate-binding site is contributed by K442.

Belongs to the TRAFAC class TrmE-Era-EngA-EngB-Septin-like GTPase superfamily. TrmE GTPase family. As to quaternary structure, homodimer. Heterotetramer of two MnmE and two MnmG subunits. Requires K(+) as cofactor.

It is found in the cytoplasm. Functionally, exhibits a very high intrinsic GTPase hydrolysis rate. Involved in the addition of a carboxymethylaminomethyl (cmnm) group at the wobble position (U34) of certain tRNAs, forming tRNA-cmnm(5)s(2)U34. This chain is tRNA modification GTPase MnmE, found in Mesomycoplasma hyopneumoniae (strain J / ATCC 25934 / NCTC 10110) (Mycoplasma hyopneumoniae).